The primary structure comprises 383 residues: Guanine nucleotide-binding protein G(s) subunit alpha (383 aa).

The disordered stretch occupies residues 1–31 (MGCFGSAGSKQSDSNSSEDTKSQKRRSDAIT). A lipid anchor (N-palmitoyl glycine) is attached at glycine 2. Cysteine 3 carries S-palmitoyl cysteine lipidation. Positions 8–17 (GSKQSDSNSS) are enriched in polar residues. Basic and acidic residues predominate over residues 18–31 (EDTKSQKRRSDAIT). Residues 43-383 (ATHRLLLLGA…RMHLRQYELL (341 aa)) enclose the G-alpha domain. Positions 46–59 (RLLLLGAGESGKST) are G1 motif. Residues 51 to 58 (GAGESGKS), 187 to 193 (LRCRVLT), 212 to 216 (DVGGQ), 281 to 284 (NKQD), and alanine 355 each bind GTP. Mg(2+) contacts are provided by serine 58 and threonine 193. The segment at 185 to 193 (DILRCRVLT) is G2 motif. The G3 motif stretch occupies residues 208–217 (FHMFDVGGQR). Positions 277–284 (ILFLNKQD) are G4 motif. Positions 353–358 (TCAVDT) are G5 motif.

Belongs to the G-alpha family. G(s) subfamily. As to quaternary structure, g proteins are composed of 3 units; alpha, beta and gamma. The alpha chain contains the guanine nucleotide binding site.

In terms of biological role, guanine nucleotide-binding proteins (G proteins) are involved as modulators or transducers in various transmembrane signaling systems. The G(s) protein is involved in hormonal regulation of adenylate cyclase: it activates the cyclase. Participates in olfactory signal transduction. This Anopheles gambiae (African malaria mosquito) protein is Guanine nucleotide-binding protein G(s) subunit alpha.